The following is a 61-amino-acid chain: MAKKSMIAKNKRPAKHSTQAYTRCEKCGRPHSVSRKFKLCRVCFRELAYKGQIPGVVKASW.

4 residues coordinate Zn(2+): Cys24, Cys27, Cys40, and Cys43.

This sequence belongs to the universal ribosomal protein uS14 family. Zinc-binding uS14 subfamily. Part of the 30S ribosomal subunit. Contacts proteins S3 and S10. Requires Zn(2+) as cofactor.

Functionally, binds 16S rRNA, required for the assembly of 30S particles and may also be responsible for determining the conformation of the 16S rRNA at the A site. This Streptococcus pyogenes serotype M49 (strain NZ131) protein is Small ribosomal subunit protein uS14.